Reading from the N-terminus, the 151-residue chain is Putative pre-16S rRNA nuclease (151 aa).

This sequence belongs to the YqgF nuclease family.

The protein resides in the cytoplasm. Functionally, could be a nuclease involved in processing of the 5'-end of pre-16S rRNA. This is Putative pre-16S rRNA nuclease from Aster yellows witches'-broom phytoplasma (strain AYWB).